Reading from the N-terminus, the 3411-residue chain is MSGRKAQGKTLGVNMVRRGVRSLSNKIKQKTKQIGNRPGPSRGVQGFIFFFLFNILTGKKITAHLKRLWKMLDPRQGLAALRKVKRVVAGLMRGLSSRKRRSHDVLTVQFLILGMLLMTGGVTLVRKNRWLLLNVTSEDLGKTFSMGTGNCTTNILEAKYWCPDSMEYNCPNLSPREEPDDIDCWCYGVENVRVAYGKCDSAGRSRRSRRAIDLPTHENHGLKTRQEKWMTGRMGERQLQKIERWFVRNPFFAVTALTIAYLVGSNMTQRVVIALLVLAVGPAYSAHCIGITDRDFIEGVHGGTWVSATLEQDKCVTVMAPDKPSLDISLETVAIDGPVEARKVCYNAVLTHVKINDKCPSTGEAHLAEENEGDNACKRTYSDRGWGNGCGLFGKGSIVACAKFTCAKSMSLFEVDQTKIQYVIRARLHVGAKQENWKTDIKTLKFDALSGSQEAEFTGYGKATLECQVQTAVDFGNSYIAEMEKESWIVDRQWAQDLTLPWQSGSGGVWREMHHLVEFEPPHAATIRVLALGDQEGSLKTALTGAMRVTKDTNDNNLYKLHGGHVSCRVKLSALTLKGTSYKMCTDKMSFVKNPTDTGHGTVVMQVKVPKGAPCRIPVIVADDLTAAINKGILVTVNPIASTNDDEVLIEVNPPFGDSYIIVGTGDSRLTYQWHKEGSSIGKLFTQTMKGAERLAVMGDAAWDFSSAGGFFTSVGKGIHTVFGSAFQGLFGGLNWITKVIIGAVLIWVGINTRNMTMSMSMILVGVIMMFLSLGVGADQGCAINFAKRELKCGDGIFIFRDSDDWLNKYSYYPEDPVKLASIVKASFEEGKCGLNSVDSLEHEMWRSRADEINAILEENEVDISVVVQDPKNVYQRGTHPFSRIRDGLQYGWKTWGKNLVFSPGRKNGSFIIDGKSRKECPFSNRVWNSFQIEEFGTGVFTTRVYMDAVFEYTIDCDGSILGAAVNGKKSAHGSPTFWMGSHEVNGTWMIHTLEALDYKECEWPLTHTIGTSVEESEMFMPRSIGGPVSSHNHIPGYKVQTNGPWMQVPLEVKREACPGTSVIIDGNCDGRGKSARSTTDSGKIIPEWCCRSCTMPPVSFHGSDGCWYPMEIRPRKTHESHLVRSWVTAGEIHAVPFGLVSMMIALEVVLRKRQGPKQMLVGGVVLLGAMLVGQVTLLDLLKLTVAVGLHFHEMNNGGDAMYMALIAAFSVRPGLLIGFGLRTLWSPRERLVLALGAAMVEIALGGMMGGLWKYLNAVSLCILTINAVASRKASNTILPLMALLTPVTMAEVRLATMLFCTVVIIGVLYQNSKDTSMQKTIPLVALTLTSYLGLTQPFLGLCAFLATRIFGRRSIPVNEALAAAGLVGVLAGLAFQEMENFLGPIAVGGILMMLVSVAGRVDGLELKKLGEVAWEEEAEISGSSARYDVALSEQGEFKLLSEEKVPWDQVVMTSLALVGAAIHPFALLLVLAGWLFHVRGARRSGDVLWDIPTPKVIEECEHLEDGIYGIFQSTFLGASQRGVGVAQGGVFHTMWHVTRGAFLVRNGKKLIPSWASVKEDLVAYGGSWKLEGRWDGEEEVQLIAAVPGKNVVNVQTKPSLFKVRNGGEIGAVALDYPSGTSGSPIVNRNGEVIGLYGNGILVGDNSFVSAISQTEVKEEGKEELQEIPTMLKKGKTTILDFHPGAGKTRRFLPQILAECARRRLRTLVLAPTRVVLSEMKEAFHGLDVKFHTQAFSAHGSGREVIDAMCHATLTYRMLEPTRIVNWEVIIMDEAHFLDPASIAARGWAAHRARANESATILMTATPPGTSDEFPHSNGEIEDVQTDIPSEPWNTGHDWILADKRPTAWFLPSIRAANVMAASLRKAGKSVVVLNRKTFEREYPTIKQKKPDFILATDIAEMGANLCVERVLDCRTAFKPVLVDEGRKVAIKGPLRISASSAAQRRGRIGRNPNRDGDSYYYSEPTSEDNAHHVCWLEASMLLDNMEVRGGMVAPLYGVEGTKTPVSPGEMRLRDDQRKVFRELVRNCDLPVWLSWQVAKAGLKTNDRKWCFEGPEEHEILNDSGETVKCRTPGGAKKPLRPRWCDERVSSDQSALSEFIKFAEGRRGAAEVLVVLSELPDFLAKKGGEAMDTISVLLHSEEGSRAYRNALSMMPEAMTIVMLFILAGLLTSGMVIFFMSPKGISRMSMAMGTMAGCGYLMFLGGVKPTHISYIMLIFFVLMVVVIPEPGQQRSIQDNQVAFLIIGILTLVSVVAANELGMLEKTKEDLFGKKNSIPSSASPWSWPDLDLKPGAAWTVYVGIVTMLSPMLHHWIKVEYGNLSLSGIAQSASVLSFMDKGIPFMKMNISVIMLLISGWNSITVMPLLCGIGCAMLHWSLILPGIKAQQSKLAQRRVFHGVAKNPVVDGNPTVDIEEAPEMPVLYEKKLALYLLLALSLASVAMCRTPFSLAEGIVLASAALGPLIEGNTSLLWNGPMAVSMTGVMRGNYYAFVGVMYNLWKMKTGRRGTANGKTLGEVWKRELNLLDKQQFELYKRTDIVEVDRDTARRHLAEGKVDTGVAVSRGTAKLRWFHERGYVKLEGRVIDLGCGRGGWCYYAAAQKEVSGVKGFTLGRDGHEKPMNVQSLGWNIITFKDKTDIHRLEPVKCDTLLCDIGESSSSSVTEGERTVRVLDTVEKWLACGVDNFCVKVLAPYMPDVLEKLELLQRRFGGTVIRNPLSRNSTHEMYYVSGARSNVTFTVNQTSRLLMRRMRRPTGKVTLEADVTLPIGTRSVETDKGPLDKEAIEERVERIKSEYMTSWFYDNDNPYRTWHYCGSYVTKTSGSAASMVNGVIKILTYPWDKIEEVTRMAMTDTTPFGQQRVFKEKVDTRAKDPPAGTRKIMKVVNRWLFRHLAREKNPRLCTKEEFIAKVRSHAAIGAYLEEQEQWKTANEAVQDPKFWELVDEERKLHQQGRCRTCVYNMMGKREKKLSEFGKAKGSRAIWYMWLGARYLEFEALGFLNEDHWASRENSGGGVEGIGLQYLGYVIRDLAAMDGGGFYADDTAGWDTRITEADLDDEQEILNYMSPHHKKLAQAVMEMTYKNKVVKVLRPAPGGKAYMDVISRRDQRGSGQVVTYALNTITNLKVQLIRMAEAEMVIHHQHVQDCDESVLTRLEAWLTEHGCNRLRRMAVSGDDCVVRPIDDRFGLALSHLNAMSKVRKDISEWQPSKGWNDWENVPFCSHHFHELQLKDGRRIVVPCREQDELIGRGRVSPGNGWMIKETACLSKAYANMWSLMYFHKRDMRLLSLAVSSAVPTSWVPQGRTTWSIHGKGEWMTTEDMLEVWNRVWITNNPHMQDKTMVKEWRDVPYLTKRQDKLCGSLIGMTNRATWASHIHLVIHRIRTLVGQEKYTDYLTVMDRYSVDADLQPGELI.

Over 1 to 104 (MSGRKAQGKT…LSSRKRRSHD (104 aa)) the chain is Cytoplasmic. Residues 38 to 72 (PGPSRGVQGFIFFFLFNILTGKKITAHLKRLWKML) form a hydrophobic; homodimerization of capsid protein C region. The propeptide at 102–121 (SHDVLTVQFLILGMLLMTGG) is ER anchor for the capsid protein C, removed in mature form by serine protease NS3. The helical transmembrane segment at 105–125 (VLTVQFLILGMLLMTGGVTLV) threads the bilayer. The Extracellular segment spans residues 126-244 (RKNRWLLLNV…GERQLQKIER (119 aa)). N-linked (GlcNAc...) asparagine; by host glycosylation is found at N134 and N150. Residues 245-265 (WFVRNPFFAVTALTIAYLVGS) form a helical membrane-spanning segment. The Cytoplasmic portion of the chain corresponds to 266 to 270 (NMTQR). Residues 271–285 (VVIALLVLAVGPAYS) traverse the membrane as a helical segment. Over 286 to 730 (AHCIGITDRD…TVFGSAFQGL (445 aa)) the chain is Extracellular. 8 disulfides stabilise this stretch: C288/C315, C345/C401, C345/C406, C359/C390, C377/C401, C377/C406, C467/C568, and C585/C615. The fusion peptide stretch occupies residues 383–396 (DRGWGNGCGLFGKG). A helical transmembrane segment spans residues 731–751 (FGGLNWITKVIIGAVLIWVGI). Residues 752–757 (NTRNMT) lie on the Extracellular side of the membrane. A helical membrane pass occupies residues 758-778 (MSMSMILVGVIMMFLSLGVGA). Topologically, residues 779-1132 (DQGCAINFAK…LVRSWVTAGE (354 aa)) are extracellular. 6 disulfide bridges follow: C782/C793, C833/C921, C957/C1002, C1058/C1107, C1069/C1091, and C1090/C1094. N-linked (GlcNAc...) asparagine; by host glycans are attached at residues N908 and N986. The helical transmembrane segment at 1133–1153 (IHAVPFGLVSMMIALEVVLRK) threads the bilayer. Over 1154-1201 (RQGPKQMLVGGVVLLGAMLVGQVTLLDLLKLTVAVGLHFHEMNNGGDA) the chain is Cytoplasmic. Residues 1202–1222 (MYMALIAAFSVRPGLLIGFGL) traverse the membrane as a helical segment. Over 1223-1287 (RTLWSPRERL…ILPLMALLTP (65 aa)) the chain is Lumenal. The chain crosses the membrane as a helical span at residues 1288–1308 (VTMAEVRLATMLFCTVVIIGV). Over 1309-1355 (LYQNSKDTSMQKTIPLVALTLTSYLGLTQPFLGLCAFLATRIFGRRS) the chain is Cytoplasmic. The chain crosses the membrane as a helical span at residues 1356-1376 (IPVNEALAAAGLVGVLAGLAF). Topologically, residues 1377–1378 (QE) are lumenal. Residues 1379–1399 (MENFLGPIAVGGILMMLVSVA) form a helical membrane-spanning segment. At 1400-1456 (GRVDGLELKKLGEVAWEEEAEISGSSARYDVALSEQGEFKLLSEEKVPWDQVVMTSL) the chain is on the cytoplasmic side. Positions 1407–1446 (LKKLGEVAWEEEAEISGSSARYDVALSEQGEFKLLSEEKV) are interacts with and activates NS3 protease. An intramembrane region (helical) is located at residues 1457 to 1477 (ALVGAAIHPFALLLVLAGWLF). The Cytoplasmic portion of the chain corresponds to 1478–2157 (HVRGARRSGD…RNALSMMPEA (680 aa)). The region spanning 1485–1665 (SGDVLWDIPT…EVKEEGKEEL (181 aa)) is the Peptidase S7 domain. Catalysis depends on charge relay system; for serine protease NS3 activity residues H1537, D1561, and S1622. One can recognise a Helicase ATP-binding domain in the interval 1669–1825 (PTMLKKGKTT…HSNGEIEDVQ (157 aa)). Positions 1673 to 1676 (KKGK) are important for RNA-binding. Residue 1682–1689 (FHPGAGKT) participates in ATP binding. The short motif at 1773–1776 (DEAH) is the DEAH box element. In terms of domain architecture, Helicase C-terminal spans 1820–1997 (EIEDVQTDIP…VRGGMVAPLY (178 aa)). At K1877 the chain carries N6-acetyllysine; by host. The tract at residues 1942–1961 (AAQRRGRIGRNPNRDGDSYY) is disordered. Residues 2158-2178 (MTIVMLFILAGLLTSGMVIFF) traverse the membrane as a helical segment. Residues 2179-2186 (MSPKGISR) lie on the Lumenal side of the membrane. The helical intramembrane region spans 2187–2207 (MSMAMGTMAGCGYLMFLGGVK). The Lumenal portion of the chain corresponds to 2208 to 2209 (PT). Residues 2210 to 2230 (HISYIMLIFFVLMVVVIPEPG) form a helical membrane-spanning segment. At 2231–2241 (QQRSIQDNQVA) the chain is on the cytoplasmic side. The helical transmembrane segment at 2242–2262 (FLIIGILTLVSVVAANELGML) threads the bilayer. At 2263 to 2293 (EKTKEDLFGKKNSIPSSASPWSWPDLDLKPG) the chain is on the lumenal side. The segment at residues 2294-2314 (AAWTVYVGIVTMLSPMLHHWI) is an intramembrane region (helical). Residues 2315-2360 (KVEYGNLSLSGIAQSASVLSFMDKGIPFMKMNISVIMLLISGWNSI) lie on the Lumenal side of the membrane. Residues 2361 to 2380 (TVMPLLCGIGCAMLHWSLIL) traverse the membrane as a helical segment. At 2381-2421 (PGIKAQQSKLAQRRVFHGVAKNPVVDGNPTVDIEEAPEMPV) the chain is on the cytoplasmic side. Residues 2422-2442 (LYEKKLALYLLLALSLASVAM) form a helical membrane-spanning segment. The Lumenal portion of the chain corresponds to 2443 to 2445 (CRT). Residues 2446–2466 (PFSLAEGIVLASAALGPLIEG) traverse the membrane as a helical segment. The Cytoplasmic portion of the chain corresponds to 2467-3411 (NTSLLWNGPM…DADLQPGELI (945 aa)). Residues 2507-2771 (GTANGKTLGE…DVTLPIGTRS (265 aa)) enclose the mRNA cap 0-1 NS5-type MT domain. S-adenosyl-L-methionine is bound at residue S2562. The residue at position 2562 (S2562) is a Phosphoserine. Residue K2567 is the For 2'-O-MTase activity of the active site. 6 residues coordinate S-adenosyl-L-methionine: G2592, W2593, T2610, L2611, D2637, and I2638. The active-site For 2'-O-MTase activity is D2652. I2653 is a binding site for S-adenosyl-L-methionine. Catalysis depends on for 2'-O-MTase activity residues K2688 and E2724. Y2726 contacts S-adenosyl-L-methionine. The short motif at 2878-2911 (RKIMKVVNRWLFRHLAREKNPRLCTKEEFIAKVR) is the Nuclear localization signal element. Positions 2945, 2949, 2954, and 2957 each coordinate Zn(2+). Residues 3035-3187 (GGFYADDTAG…RPIDDRFGLA (153 aa)) enclose the RdRp catalytic domain. Zn(2+)-binding residues include H3222, C3238, and C3357.

It in the N-terminal section; belongs to the class I-like SAM-binding methyltransferase superfamily. mRNA cap 0-1 NS5-type methyltransferase family. In terms of assembly, homodimer. Interacts (via N-terminus) with host EXOC1 (via C-terminus); this interaction results in EXOC1 degradation through the proteasome degradation pathway. As to quaternary structure, forms heterodimers with envelope protein E in the endoplasmic reticulum and Golgi. Homodimer; in the endoplasmic reticulum and Golgi. Interacts with protein prM. Interacts with non-structural protein 1. In terms of assembly, homodimer; Homohexamer when secreted. Interacts with envelope protein E. As to quaternary structure, interacts (via N-terminus) with serine protease NS3. Forms a heterodimer with serine protease NS3. May form homooligomers. In terms of assembly, forms a heterodimer with NS2B. Interacts with non-structural protein 2A (via N-terminus). Interacts with NS4B. Interacts with unphosphorylated RNA-directed RNA polymerase NS5; this interaction stimulates RNA-directed RNA polymerase NS5 guanylyltransferase activity. NS3 interacts with host PDCD6IP; this interaction contributes to virion release. As to quaternary structure, interacts with serine protease NS3. Homodimer. Interacts with host STAT2; this interaction prevents the establishment of cellular antiviral state. Interacts with serine protease NS3. Interacts with host TRIM23; this interaction leads to NS5 ubiquitination. Specific enzymatic cleavages in vivo yield mature proteins. The nascent capsid protein C contains a C-terminal hydrophobic domain that act as a signal sequence for translocation of prM into the lumen of the ER. Mature capsid protein C is cleaved at a site upstream of this hydrophobic domain by NS3. prM is cleaved in post-Golgi vesicles by a host furin, releasing the mature small envelope protein M, and peptide pr. Non-structural protein 2A-alpha, a C-terminally truncated form of non-structural protein 2A, results from partial cleavage by NS3. Specific enzymatic cleavages in vivo yield mature proteins peptide 2K acts as a signal sequence and is removed from the N-terminus of NS4B by the host signal peptidase in the ER lumen. Signal cleavage at the 2K-4B site requires a prior NS3 protease-mediated cleavage at the 4A-2K site. In terms of processing, cleaved in post-Golgi vesicles by a host furin, releasing the mature small envelope protein M, and peptide pr. This cleavage is incomplete as up to 30% of viral particles still carry uncleaved prM. Post-translationally, N-glycosylated. N-glycosylated. The excreted form is glycosylated and this is required for efficient secretion of the protein from infected cells. In terms of processing, polyubiquitinated; ubiquitination is probably mediated by host TRIM23 and is prerequisite for NS5-STAT2 interaction. NS5 is not ISGylated or sumoylated. Post-translationally, phosphorylated on serines residues. This phosphorylation may trigger NS5 nuclear localization. Acetylated by host KAT5. Acetylation modulates NS3 RNA-binding and -unwinding activities and plays an important role for viral replication.

It localises to the virion. Its subcellular location is the host nucleus. It is found in the host cytoplasm. The protein resides in the host perinuclear region. The protein localises to the secreted. It localises to the virion membrane. Its subcellular location is the host endoplasmic reticulum membrane. The enzyme catalyses Selective hydrolysis of -Xaa-Xaa-|-Yaa- bonds in which each of the Xaa can be either Arg or Lys and Yaa can be either Ser or Ala.. It catalyses the reaction RNA(n) + a ribonucleoside 5'-triphosphate = RNA(n+1) + diphosphate. The catalysed reaction is a ribonucleoside 5'-triphosphate + H2O = a ribonucleoside 5'-diphosphate + phosphate + H(+). It carries out the reaction ATP + H2O = ADP + phosphate + H(+). The enzyme catalyses a 5'-end (5'-triphosphoguanosine)-ribonucleoside in mRNA + S-adenosyl-L-methionine = a 5'-end (N(7)-methyl 5'-triphosphoguanosine)-ribonucleoside in mRNA + S-adenosyl-L-homocysteine. It catalyses the reaction a 5'-end (N(7)-methyl 5'-triphosphoguanosine)-ribonucleoside in mRNA + S-adenosyl-L-methionine = a 5'-end (N(7)-methyl 5'-triphosphoguanosine)-(2'-O-methyl-ribonucleoside) in mRNA + S-adenosyl-L-homocysteine + H(+). Plays a role in virus budding by binding to the cell membrane and gathering the viral RNA into a nucleocapsid that forms the core of a mature virus particle. During virus entry, may induce genome penetration into the host cytoplasm after hemifusion induced by the surface proteins. Can migrate to the cell nucleus where it modulates host functions. Functionally, inhibits RNA silencing by interfering with host Dicer. In terms of biological role, prevents premature fusion activity of envelope proteins in trans-Golgi by binding to envelope protein E at pH6.0. After virion release in extracellular space, gets dissociated from E dimers. Its function is as follows. Acts as a chaperone for envelope protein E during intracellular virion assembly by masking and inactivating envelope protein E fusion peptide. prM is the only viral peptide matured by host furin in the trans-Golgi network probably to avoid catastrophic activation of the viral fusion activity in acidic Golgi compartment prior to virion release. prM-E cleavage is inefficient, and many virions are only partially matured. These uncleaved prM would play a role in immune evasion. May play a role in virus budding. Exerts cytotoxic effects by activating a mitochondrial apoptotic pathway through M ectodomain. May display a viroporin activity. Functionally, binds to host cell surface receptor and mediates fusion between viral and cellular membranes. Envelope protein is synthesized in the endoplasmic reticulum in the form of heterodimer with protein prM. They play a role in virion budding in the ER, and the newly formed immature particle is covered with 60 spikes composed of heterodimer between precursor prM and envelope protein E. The virion is transported to the Golgi apparatus where the low pH causes dissociation of PrM-E heterodimers and formation of E homodimers. prM-E cleavage is inefficient, and many virions are only partially matured. These uncleaved prM would play a role in immune evasion. In terms of biological role, involved in immune evasion, pathogenesis and viral replication. Once cleaved off the polyprotein, is targeted to three destinations: the viral replication cycle, the plasma membrane and the extracellular compartment. Essential for viral replication. Required for formation of the replication complex and recruitment of other non-structural proteins to the ER-derived membrane structures. Excreted as a hexameric lipoparticle that plays a role against host immune response. Antagonizing the complement function. Binds to the host macrophages and dendritic cells. Inhibits signal transduction originating from Toll-like receptor 3 (TLR3). Its function is as follows. Component of the viral RNA replication complex that functions in virion assembly and antagonizes the host immune response. Required cofactor for the serine protease function of NS3. May have membrane-destabilizing activity and form viroporins. Functionally, displays three enzymatic activities: serine protease, NTPase and RNA helicase. NS3 serine protease, in association with NS2B, performs its autocleavage and cleaves the polyprotein at dibasic sites in the cytoplasm: C-prM, NS2A-NS2B, NS2B-NS3, NS3-NS4A, NS4A-2K and NS4B-NS5. NS3 RNA helicase binds RNA and unwinds dsRNA in the 3' to 5' direction. Also plays a role in virus assembly. In terms of biological role, regulates the ATPase activity of the NS3 helicase activity. NS4A allows NS3 helicase to conserve energy during unwinding. Its function is as follows. Functions as a signal peptide for NS4B and is required for the interferon antagonism activity of the latter. Induces the formation of ER-derived membrane vesicles where the viral replication takes place. Inhibits interferon (IFN)-induced host STAT1 phosphorylation and nuclear translocation, thereby preventing the establishment of cellular antiviral state by blocking the IFN-alpha/beta pathway. Functionally, replicates the viral (+) and (-) RNA genome, and performs the capping of genomes in the cytoplasm. NS5 methylates viral RNA cap at guanine N-7 and ribose 2'-O positions. Besides its role in RNA genome replication, also prevents the establishment of cellular antiviral state by blocking the interferon-alpha/beta (IFN-alpha/beta) signaling pathway. IFN-I induces binding of NS5 to host IFN-activated transcription factor STAT2, preventing its transcriptional activity. Host TRIM23 is the E3 ligase that interacts with and polyubiquitinates NS5 to promote its binding to STAT2 and trigger IFN-I signaling inhibition. The sequence is that of Genome polyprotein from Yellow fever virus (strain French neurotropic vaccine FNV) (YFV).